The chain runs to 588 residues: Aspartate--tRNA ligase (588 aa).

Glu177 is an L-aspartate binding site. The aspartate stretch occupies residues 201–204 (QLFK). An L-aspartate-binding site is contributed by Arg223. Residues 223-225 (RDE) and Gln232 each bind ATP. His451 serves as a coordination point for L-aspartate. Residue Glu485 participates in ATP binding. Arg492 serves as a coordination point for L-aspartate. An ATP-binding site is contributed by 537-540 (GLDR).

Belongs to the class-II aminoacyl-tRNA synthetase family. Type 1 subfamily. In terms of assembly, homodimer.

Its subcellular location is the cytoplasm. It catalyses the reaction tRNA(Asp) + L-aspartate + ATP = L-aspartyl-tRNA(Asp) + AMP + diphosphate. Its function is as follows. Catalyzes the attachment of L-aspartate to tRNA(Asp) in a two-step reaction: L-aspartate is first activated by ATP to form Asp-AMP and then transferred to the acceptor end of tRNA(Asp). This Staphylococcus carnosus (strain TM300) protein is Aspartate--tRNA ligase.